The sequence spans 438 residues: Na(+)/H(+) antiporter NhaA (438 aa).

11 consecutive transmembrane segments (helical) span residues 23–43 (FGGI…NSFL), 62–82 (FFIG…LFFL), 104–124 (SFPV…YFFL), 133–153 (GFGI…MLLG), 162–182 (VFLI…IALF), 185–205 (TNLK…LAIL), 212–232 (SLIP…QSGI), 302–322 (FLAP…NAGV), 337–357 (LGVI…ITFI), 372–392 (WWHI…SMFI), and 410–430 (IAIL…LFAL).

Belongs to the NhaA Na(+)/H(+) (TC 2.A.33) antiporter family.

It localises to the cell inner membrane. The catalysed reaction is Na(+)(in) + 2 H(+)(out) = Na(+)(out) + 2 H(+)(in). In terms of biological role, na(+)/H(+) antiporter that extrudes sodium in exchange for external protons. This is Na(+)/H(+) antiporter NhaA from Helicobacter pylori (strain J99 / ATCC 700824) (Campylobacter pylori J99).